Here is a 657-residue protein sequence, read N- to C-terminus: Replication restart protein PriA (657 aa).

Residues 143–309 form the Helicase ATP-binding domain; sequence ITASTGARSF…LRGAVRRLPL (167 aa). 156–163 serves as a coordination point for ATP; the sequence is GVTGSGKT. The DEAH box motif lies at 252–255; it reads DEEH. Cysteine 366, cysteine 369, cysteine 375, cysteine 378, cysteine 393, cysteine 396, cysteine 406, and cysteine 409 together coordinate Zn(2+). Positions 390–570 constitute a Helicase C-terminal domain; the sequence is AMQCHYCGRQ…PFVRLIRFVF (181 aa).

Belongs to the helicase family. PriA subfamily. Component of the replication restart primosome. Requires Zn(2+) as cofactor.

It catalyses the reaction Couples ATP hydrolysis with the unwinding of duplex DNA by translocating in the 3'-5' direction.. It carries out the reaction ATP + H2O = ADP + phosphate + H(+). Initiates the restart of stalled replication forks, which reloads the replicative helicase on sites other than the origin of replication. Recognizes and binds to abandoned replication forks and remodels them to uncover a helicase loading site. Promotes assembly of the primosome at these replication forks. The chain is Replication restart protein PriA from Treponema pallidum (strain Nichols).